The chain runs to 357 residues: Ribosomal RNA small subunit methyltransferase C (357 aa).

It belongs to the methyltransferase superfamily. RsmC family. Monomer.

The protein localises to the cytoplasm. The catalysed reaction is guanosine(1207) in 16S rRNA + S-adenosyl-L-methionine = N(2)-methylguanosine(1207) in 16S rRNA + S-adenosyl-L-homocysteine + H(+). Specifically methylates the guanine in position 1207 of 16S rRNA in the 30S particle. In Colwellia psychrerythraea (strain 34H / ATCC BAA-681) (Vibrio psychroerythus), this protein is Ribosomal RNA small subunit methyltransferase C.